A 119-amino-acid polypeptide reads, in one-letter code: Centrocin 1 (119 aa).

Positions 1-20 (MMIKIAVVLCAVMATTMVRA) are cleaved as a signal peptide. Residues 21–50 (KYVEEQELADLLDLLISEEVSSPDDAVALQ) constitute a propeptide that is removed on maturation. 6'-bromotryptophan is present on residues Trp52 and Trp53. Cys75 and Cys110 are oxidised to a cystine. The propeptide occupies 81–104 (SPQEARAKVLEAFPEMKEADLDEE). An Asparagine amide modification is found at Asn117.

As to quaternary structure, heterodimer of a light and a heavy chain, probably disulfide-linked.

In terms of biological role, has antimicrobial activity against Gram-negative bacteria, Gram-positive bacteria and against fungi with minimum inhibitory concentration (MIC) between 0.78 uM and 50 uM. Shows little hemolytic activity even at a concentration of 100 uM. Has no antimicrobial activity. Shows no hemolytic activity. The protein is Centrocin 1 of Echinus esculentus (Sea urchin).